A 311-amino-acid chain; its full sequence is Dermonecrotic toxin LlSicTox-alphaIII1i (311 aa).

The N-terminal stretch at 1 to 21 (MYAHLALILGCWTVVLQGAET) is a signal peptide. Residues 22–26 (DVGER) constitute a propeptide that is removed on maturation. The active site involves histidine 38. 2 residues coordinate Mg(2+): glutamate 58 and aspartate 60. Histidine 73 acts as the Nucleophile in catalysis. Residues cysteine 77 and cysteine 83 are joined by a disulfide bond. A Mg(2+)-binding site is contributed by aspartate 117.

Belongs to the arthropod phospholipase D family. Class I subfamily. The cofactor is Mg(2+). In terms of tissue distribution, expressed by the venom gland.

The protein localises to the secreted. It catalyses the reaction an N-(acyl)-sphingosylphosphocholine = an N-(acyl)-sphingosyl-1,3-cyclic phosphate + choline. The catalysed reaction is an N-(acyl)-sphingosylphosphoethanolamine = an N-(acyl)-sphingosyl-1,3-cyclic phosphate + ethanolamine. The enzyme catalyses a 1-acyl-sn-glycero-3-phosphocholine = a 1-acyl-sn-glycero-2,3-cyclic phosphate + choline. It carries out the reaction a 1-acyl-sn-glycero-3-phosphoethanolamine = a 1-acyl-sn-glycero-2,3-cyclic phosphate + ethanolamine. Functionally, dermonecrotic toxins cleave the phosphodiester linkage between the phosphate and headgroup of certain phospholipids (sphingolipid and lysolipid substrates), forming an alcohol (often choline) and a cyclic phosphate. This toxin acts on sphingomyelin (SM) with high activity. It also act on acyl- and alkyl-lysophosphatidylcholine (LPC), but not on sphingosylphosphorylcholine (SPC) and phosphatidylcholine (PC). It may also act on ceramide phosphoethanolamine (CPE), and lysophosphatidylethanolamine (LPE), but not on lysophosphatidylserine (LPS), and lysophosphatidylglycerol (LPG). It acts by transphosphatidylation, releasing exclusively cyclic phosphate products as second products. Induces complement-dependent hemolysis and dermonecrosis. Also induces increased vascular permeability, edema, inflammatory response, and platelet aggregation. In Loxosceles laeta (South American recluse spider), this protein is Dermonecrotic toxin LlSicTox-alphaIII1i.